Consider the following 243-residue polypeptide: uncharacterized protein (243 aa).

Residues 1–19 form the signal peptide; the sequence is MKSLPLLGILAFAANRLSA. Residues Asn112 and Asn206 are each glycosylated (N-linked (GlcNAc...) asparagine).

This is an uncharacterized protein from Encephalitozoon cuniculi (strain GB-M1) (Microsporidian parasite).